We begin with the raw amino-acid sequence, 145 residues long: 3-dehydroquinate dehydratase (145 aa).

Tyrosine 24 (proton acceptor) is an active-site residue. Substrate-binding residues include asparagine 75, histidine 81, and aspartate 88. The active-site Proton donor is the histidine 101. Substrate contacts are provided by residues 102-103 (IS) and arginine 112.

The protein belongs to the type-II 3-dehydroquinase family. Homododecamer.

It catalyses the reaction 3-dehydroquinate = 3-dehydroshikimate + H2O. Its pathway is metabolic intermediate biosynthesis; chorismate biosynthesis; chorismate from D-erythrose 4-phosphate and phosphoenolpyruvate: step 3/7. Its function is as follows. Catalyzes a trans-dehydration via an enolate intermediate. In Corynebacterium glutamicum (strain R), this protein is 3-dehydroquinate dehydratase.